A 335-amino-acid chain; its full sequence is Cholinephosphotransferase 1 (335 aa).

2 helical membrane-spanning segments follow: residues 53-73 (PNAI…PLIA) and 84-108 (FWAY…GKQA). Position 54 (N54) interacts with CDP-choline. Mg(2+)-binding residues include D101 and D104. CDP-choline is bound at residue R109. The next 6 membrane-spanning stretches (helical) occupy residues 116 to 140 (PLGE…SCIA), 151 to 169 (FFCC…WQTY), 181 to 197 (VTEV…VSAF), 213 to 238 (ELKF…RIIF), 267 to 276 (IGPGLLFLDQ), and 284 to 313 (EYVV…IAAH). D122 is a binding site for Mg(2+). H123 serves as the catalytic Proton acceptor. D126 provides a ligand contact to Mg(2+).

This sequence belongs to the CDP-alcohol phosphatidyltransferase class-I family. It depends on Mg(2+) as a cofactor. Mn(2+) serves as cofactor.

Its subcellular location is the golgi apparatus membrane. The catalysed reaction is CDP-choline + a 1,2-diacyl-sn-glycerol = a 1,2-diacyl-sn-glycero-3-phosphocholine + CMP + H(+). The enzyme catalyses 1-octadecanoyl-2-(5Z,8Z,11Z,14Z-eicosatetraenoyl)-sn-glycerol + CDP-choline = 1-octadecanoyl-2-(5Z,8Z,11Z,14Z-eicosatetraenoyl)-sn-glycero-3-phosphocholine + CMP + H(+). It catalyses the reaction 1-hexadecanoyl-2-(9Z-octadecenoyl)-sn-glycerol + CDP-choline = 1-hexadecanoyl-2-(9Z-octadecenoyl)-sn-glycero-3-phosphocholine + CMP + H(+). It carries out the reaction 1-hexadecanoyl-2-(4Z,7Z,10Z,13Z,16Z,19Z-docosahexaenoyl)-sn-glycerol + CDP-choline = 1-hexadecanoyl-2-(4Z,7Z,10Z,13Z,16Z,19Z-docosahexaenoyl)-sn-glycero-3-phosphocholine + CMP + H(+). The catalysed reaction is 1,2-dioctanoyl-sn-glycerol + CDP-choline = 1,2-dioctanoyl-sn-glycero-3-phosphocholine + CMP + H(+). It participates in phospholipid metabolism; phosphatidylcholine biosynthesis; phosphatidylcholine from phosphocholine: step 2/2. Its function is as follows. Catalyzes the final step of de novo phosphatidylcholine (PC) synthesis, i.e. the transfer of choline phosphate from CDP-choline to the free hydroxyl of a diacylglycerol (DAG), producing a PC. It thereby plays a central role in the formation and maintenance of vesicular membranes. The sequence is that of Cholinephosphotransferase 1 (CHPT1) from Gallus gallus (Chicken).